The following is a 271-amino-acid chain: tRNA (guanine-N(1)-)-methyltransferase (271 aa).

S-adenosyl-L-methionine contacts are provided by residues Gly-120 and 145–150 (IGDYVL).

This sequence belongs to the RNA methyltransferase TrmD family. Homodimer.

The protein localises to the cytoplasm. The catalysed reaction is guanosine(37) in tRNA + S-adenosyl-L-methionine = N(1)-methylguanosine(37) in tRNA + S-adenosyl-L-homocysteine + H(+). Functionally, specifically methylates guanosine-37 in various tRNAs. The protein is tRNA (guanine-N(1)-)-methyltransferase of Bifidobacterium longum subsp. infantis (strain ATCC 15697 / DSM 20088 / JCM 1222 / NCTC 11817 / S12).